The sequence spans 520 residues: 2-isopropylmalate synthase (520 aa).

The Pyruvate carboxyltransferase domain maps to 4-266 (VEFLDTTLRD…TSDIVLNETV (263 aa)). Residues Asp13, His201, His203, and Asn237 each coordinate Mn(2+). The tract at residues 390-520 (HFGDLKLTSN…AVSFRDVPTN (131 aa)) is regulatory domain.

It belongs to the alpha-IPM synthase/homocitrate synthase family. LeuA type 1 subfamily. As to quaternary structure, homodimer. Requires Mn(2+) as cofactor.

It is found in the cytoplasm. It carries out the reaction 3-methyl-2-oxobutanoate + acetyl-CoA + H2O = (2S)-2-isopropylmalate + CoA + H(+). The protein operates within amino-acid biosynthesis; L-leucine biosynthesis; L-leucine from 3-methyl-2-oxobutanoate: step 1/4. Catalyzes the condensation of the acetyl group of acetyl-CoA with 3-methyl-2-oxobutanoate (2-ketoisovalerate) to form 3-carboxy-3-hydroxy-4-methylpentanoate (2-isopropylmalate). This is 2-isopropylmalate synthase from Streptococcus gallolyticus (strain UCN34).